The following is a 1194-amino-acid chain: IQ motif and SEC7 domain-containing protein 3 (1194 aa).

A coiled-coil region spans residues 20-56; it reads AIVQNQQSLIHTQRQRIDELERRLDELSAENRSLWEH. Disordered regions lie at residues 62–149 and 229–272; these read AQPP…EKER and GRPS…QQPA. Pro residues predominate over residues 63–78; that stretch reads QPPPGLVPPPSAPLPA. Positions 79–92 are enriched in low complexity; the sequence is PAATAPAATAAQEP. A compositionally biased stretch (polar residues) spans 122–133; the sequence is PSSRVQTPQSPH. Residue Ser255 is modified to Phosphoserine. An IQ domain is found at 311–340; the sequence is SRRAACTIQTAFRQYQLSKNFEKIRNSLLE. Disordered stretches follow at residues 439–471 and 515–610; these read SAGQ…QGHS and PAAV…KSAK. 2 stretches are compositionally biased toward low complexity: residues 561-572 and 600-610; these read VAEAVVEEAVAT and SSSSASTKSAK. Positions 646–839 constitute an SEC7 domain; it reads TLSTDTLRKR…VGIYERIQQK (194 aa). Residues 852–985 enclose the PH domain; sequence TKVEKSIVGM…LKESIAEVTE (134 aa). Disordered regions lie at residues 1002–1099 and 1137–1175; these read KTLS…PTPP and SSDS…HQFC. A compositionally biased stretch (basic and acidic residues) spans 1024 to 1035; that stretch reads AKREAMAGEKAT. Polar residues predominate over residues 1036 to 1052; that stretch reads ESSGEVSIHNRLQTFQH. Composition is skewed to pro residues over residues 1064–1099 and 1159–1169; these read APSP…PTPP and PPLPPPPPPYN.

This sequence belongs to the BRAG family. In terms of assembly, interacts with DLG1 and DLG4. Interacts with GPHN. As to expression, expressed in brain. Localized to dendrites, as well as somas of neuronal cells.

It localises to the cytoplasm. The protein localises to the postsynaptic density. In terms of biological role, acts as a guanine nucleotide exchange factor (GEF) for ARF1. The protein is IQ motif and SEC7 domain-containing protein 3 (Iqsec3) of Rattus norvegicus (Rat).